Here is a 428-residue protein sequence, read N- to C-terminus: C4-dicarboxylate transport protein (428 aa).

8 helical membrane-spanning segments follow: residues 8–28, 44–64, 78–98, 148–168, 184–204, 222–242, 307–327, and 355–375; these read VLYV…HLYP, LIKM…IAGM, LLYF…ATHI, GEIL…AHLG, VLFG…FGAM, LIGT…GAIA, IYMT…LTWM, and AATL…ILGI.

The protein belongs to the dicarboxylate/amino acid:cation symporter (DAACS) (TC 2.A.23) family.

Its subcellular location is the cell inner membrane. Its function is as follows. Responsible for the transport of dicarboxylates such as succinate, fumarate, and malate from the periplasm across the membrane. The polypeptide is C4-dicarboxylate transport protein (Burkholderia thailandensis (strain ATCC 700388 / DSM 13276 / CCUG 48851 / CIP 106301 / E264)).